We begin with the raw amino-acid sequence, 190 residues long: MASRGKTETSKLKQNLEEQLDRLMQQLQDLEECREELDADEYEETKKETLEQLSEFNDSLKKIMSGNMTLVDELSGMQLAIQAAISQAFKTPEVIRLFAKKQPGQLRTRLAEMDRDLMVGKLERELYTQRKVEILTALRKLGEKLTEDDETFLSANASAVLSQFEKVSTELGSGDKVLALAGFDVEKAKK.

Residues 2 to 63 (ASRGKTETSK…SEFNDSLKKI (62 aa)) adopt a coiled-coil conformation.

The protein belongs to the CTNNBIP1 family. In terms of assembly, does not interact with CTNNB1.

This chain is Protein LZIC (Lzic), found in Mus musculus (Mouse).